The following is a 152-amino-acid chain: Xanthine-guanine phosphoribosyltransferase (152 aa).

5-phospho-alpha-D-ribose 1-diphosphate contacts are provided by residues 37–38 (RG), R69, and 88–96 (DDLVDTGGT). R69 is a GMP binding site. D89 provides a ligand contact to Mg(2+). Positions 92 and 135 each coordinate guanine. Xanthine contacts are provided by D92 and I135. Residues 92-96 (DTGGT) and 134-135 (WI) each bind GMP.

This sequence belongs to the purine/pyrimidine phosphoribosyltransferase family. XGPT subfamily. In terms of assembly, homotetramer. Requires Mg(2+) as cofactor.

It is found in the cell inner membrane. The enzyme catalyses GMP + diphosphate = guanine + 5-phospho-alpha-D-ribose 1-diphosphate. It carries out the reaction XMP + diphosphate = xanthine + 5-phospho-alpha-D-ribose 1-diphosphate. It catalyses the reaction IMP + diphosphate = hypoxanthine + 5-phospho-alpha-D-ribose 1-diphosphate. It functions in the pathway purine metabolism; GMP biosynthesis via salvage pathway; GMP from guanine: step 1/1. Its pathway is purine metabolism; XMP biosynthesis via salvage pathway; XMP from xanthine: step 1/1. In terms of biological role, purine salvage pathway enzyme that catalyzes the transfer of the ribosyl-5-phosphate group from 5-phospho-alpha-D-ribose 1-diphosphate (PRPP) to the N9 position of the 6-oxopurines guanine and xanthine to form the corresponding ribonucleotides GMP (guanosine 5'-monophosphate) and XMP (xanthosine 5'-monophosphate), with the release of PPi. To a lesser extent, also acts on hypoxanthine. The polypeptide is Xanthine-guanine phosphoribosyltransferase (Yersinia pseudotuberculosis serotype O:1b (strain IP 31758)).